Consider the following 411-residue polypeptide: Potassium channel subfamily K member 3 (411 aa).

The Cytoplasmic portion of the chain corresponds to 1-8; that stretch reads MKRQNVRT. Residues 9-29 traverse the membrane as a helical segment; sequence LALIVCTFTYLLVGAAVFDAL. N-linked (GlcNAc...) asparagine glycosylation occurs at Asn-53. Residues 78–101 constitute an intramembrane region (pore-forming); that stretch reads WRFAGSFYFAITVITTIGYGHAAP. A helical membrane pass occupies residues 108 to 128; sequence VFCMFYALLGIPLTLVMFQSL. At 129–158 the chain is on the cytoplasmic side; it reads GERINTFVRYLLHRAKRGLGMRHAEVSMAN. Residues 159–179 form a helical membrane-spanning segment; it reads MVLIGFVSCISTLCIGAAAFS. Positions 184-207 form an intramembrane region, pore-forming; it reads WTFFQAYYYCFITLTTIGFGDYVA. The helical transmembrane segment at 223-243 threads the bilayer; the sequence is FSFVYILTGLTVIGAFLNLVV. Topologically, residues 244 to 411 are cytoplasmic; that stretch reads LRFMTMNAED…RGLMKRRSSV (168 aa).

The protein belongs to the two pore domain potassium channel (TC 1.A.1.8) family. Homodimer. Heterodimer with KCNK1. Heterodimer with KCNK9. As to expression, strongest expression in heart. Moderate expression in lung and brain. Low levels in liver, kidney and skeletal muscle. Expressed in cerebellar granule cells (at protein level).

Its subcellular location is the cell membrane. The enzyme catalyses K(+)(in) = K(+)(out). The catalysed reaction is Na(+)(in) = Na(+)(out). Its activity is regulated as follows. Inhibited by extracellular acidification, muscarinic signaling, divalent metal cations Zn(2+) and Ba(2+), isoflurane, bupivacaine and phenytoin. Activated by protein kinase A. Ruthenium red resistant. In terms of biological role, k(+) channel that conducts voltage-dependent outward rectifying currents upon membrane depolarization. Voltage sensing is coupled to K(+) electrochemical gradient in an 'ion flux gating' mode where outward but not inward ion flow opens the gate. Changes ion selectivity and becomes permeable to Na(+) ions in response to extracellular acidification. Protonation of the pH sensor His-98 stabilizes C-type inactivation conformation likely converting the channel from outward K(+)-conducting, to inward Na(+)-conducting to nonconductive state. Homo- and heterodimerizes to form functional channels with distinct regulatory and gating properties. Allows K(+) currents with fast-gating kinetics important for the repolarization and hyperpolarization phases of action potentials. In cerebellar granule cells, heteromeric KCNK3:KCNK9 channel may hyperpolarize the resting membrane potential to limit intrinsic neuronal excitability, but once the action potential threshold is reached, it may support high-frequency action potential firing and increased neuronal excitability. Dispensable for central chemosensory respiration i.e. breathing controlled by brainstem CO2/pH, it rather conducts pH-sensitive currents and controls the firing rate of serotonergic raphe neurons involved in potentiation of the respiratory chemoreflex. Additionally, imparts chemosensitivity to type 1 cells in carotid bodies which respond to a decrease in arterial oxygen pressure or an increase in carbon dioxide pressure or pH to initiate adaptive changes in pulmonary ventilation. In adrenal gland, contributes to the maintenance of a hyperpolarized resting membrane potential of aldosterone-producing cells at zona glomerulosa and limits aldosterone release as part of a regulatory mechanism that controls arterial blood pressure and electrolyte homeostasis. In brown adipocytes, mediates K(+) efflux that counteracts norepinephrine-induced membrane depolarization, limits Ca(2+) efflux and downstream cAMP and PKA signaling, ultimately attenuating lipid oxidation and adaptive thermogenesis. This is Potassium channel subfamily K member 3 from Rattus norvegicus (Rat).